Here is a 650-residue protein sequence, read N- to C-terminus: Acetoacetyl-coenzyme A synthetase (650 aa).

199–202 (YNGK) contacts CoA. ATP contacts are provided by residues 392 to 394 (GSP), Asp-504, Arg-519, and Arg-530. Val-546 is a Mg(2+) binding site. Arg-587 provides a ligand contact to CoA. Lys-612 is modified (N6-acetyllysine).

Belongs to the ATP-dependent AMP-binding enzyme family. Mg(2+) serves as cofactor. Post-translationally, acetylated. Deacetylation by the SIR2-homolog deacetylase activates the enzyme.

It catalyses the reaction acetoacetate + ATP + CoA = acetoacetyl-CoA + AMP + diphosphate. It functions in the pathway biopolymer metabolism; poly-(R)-3-hydroxybutanoate degradation. Catalyzes the conversion of acetoacetate into acetoacetyl-CoA. Is involved in poly-3-hydroxybutyrate (PHB) degradation, which allows growth of R.meliloti on PHB cycle intermediates. In Rhizobium meliloti (strain 1021) (Ensifer meliloti), this protein is Acetoacetyl-coenzyme A synthetase.